The sequence spans 573 residues: MRTENTATLNLIWGALILEELARLGVQHVCMAPGSRSTPLTLAAAQQTKLQRHLHFDERGLGFMALGLAKASRAPVAIITTSGTAVANLYPAIVEAWLTHVPLIVLSGDRPPELLGCGANQAIVQPGIFANYATQVNLPTPDMHIAPQALLTTVDEAVANQTRPVHINCMYREPLYPSELGGAILDAESPYLKPLQTWLQLARPYTQYGKSKQLSSPSDDAIMRFVHGKGVIVVGTLTPEQDPQQLIALSQKIGWPLLTDAQSQLRQHPAAIGNIDQLLQHPRARNLLQEADRVLVFGGRLLSKRVISYLAEQNWHSYWQVLPEQDRLDPSHNAKHIWHANAEQFAALNWYRSSSANWANTLITYNDELHHLFVRNIDQGEFGEAQVIRAIANTRPLEQQLFIGNSLPVRLYDMYAPVSCCTATTYTNRGASGIDGLLATACGIAAHEGKPTSLIIGDLSQLHDLNSLAIAKGLSSPLVIVILNNDGGNIFNLLPVPNEQVRSDYYRLSHGLEFGYAAAMFNLPYNQVDNLADFQDSYNEALDFQGASIIEVNVSQNQASDQIAALNLWVKQS.

This sequence belongs to the TPP enzyme family. MenD subfamily. In terms of assembly, homodimer. Mg(2+) serves as cofactor. The cofactor is Mn(2+). It depends on thiamine diphosphate as a cofactor.

It catalyses the reaction isochorismate + 2-oxoglutarate + H(+) = 5-enolpyruvoyl-6-hydroxy-2-succinyl-cyclohex-3-ene-1-carboxylate + CO2. It participates in quinol/quinone metabolism; 1,4-dihydroxy-2-naphthoate biosynthesis; 1,4-dihydroxy-2-naphthoate from chorismate: step 2/7. The protein operates within quinol/quinone metabolism; menaquinone biosynthesis. Functionally, catalyzes the thiamine diphosphate-dependent decarboxylation of 2-oxoglutarate and the subsequent addition of the resulting succinic semialdehyde-thiamine pyrophosphate anion to isochorismate to yield 2-succinyl-5-enolpyruvyl-6-hydroxy-3-cyclohexene-1-carboxylate (SEPHCHC). The protein is 2-succinyl-5-enolpyruvyl-6-hydroxy-3-cyclohexene-1-carboxylate synthase of Shewanella baltica (strain OS185).